The primary structure comprises 944 residues: MGRILIAHLFLPSSVGFSFDTVPHDEVGSKFMQKEESKDWIADTPLDESAIVSEEESDDDSLLSDLPEEIDSTNAQSNIATPSPGTVAAAISGIQPPPKTPSSDSPSLENSLSNLNDLFKSRGRHMAFSKNDGTNLSLPPSRHQSPPPSSVLASQRHHRRHDSELEEFARRASRSLSFSMNGTPQRRMTFDAEAWKNVIFKIKPSSFGNASFYNAISAATRSKQFDDHLFVGTCGIPTDSLPDSLKERISHDYITEHSSLVVYPTDTDFVGHYNHYCKNILWPTFHYQIPDNPKSKAYEDHSWANYVKVNKAFADTIVDNYEQDDMIWINDYHLLLVPEMVRERLPRAKIGFFLHIPFPSSEVFRCLATRQEILKGMLGANILGFQIPEFAYHFLQTCSRLVNIDIRKNGVVSFENRQIDVIALPISIDPGFIDRCLASPPVEHWAKVLQDRFRGKHIILSHDKLDPIRGLRSKLISFERFLQKYPEYRENTILLQVAPESLQDSEHLPHISDIVTRINSAYSNIASRHVPVILLRQKLGYAQFLALMMISDALIDNSLREGISLTSHQFIYVQRKRHRPLILSEFVGSASILNDNAIIVNPWDYSKTAEAFRTALTMSEEECQKRNKAMCNLILRHDAASWAVTFQSLIKESWKEQIDMQRIPAFTAQLIKEPYQNAQKRLILLYFEGTISTWGSQYHNVMTSLQRTINLLNMLTSDPKNTVYVFSALSCQELEQLFQRVPKLGIVAENGCFVRSPPKGDATMPVSKKEIAELWKNKVLGTDLTWMKTVSEIFEYYAERTTGAYVENKDATVILHLREAEDDEAAMWAAKECCESVNNFNVPCSATIQNDMVVCRSNKVSKRLAAEDIYSANGGDYDFIFAASNDPDDDTVFSWMKNFKQSKKEVVPFTFSVCVSEHGNSTNADAESSGVFGFLQALEKVYSA.

Residues 73–84 (TNAQSNIATPSP) are compositionally biased toward polar residues. 2 disordered regions span residues 73-113 (TNAQ…NSLS) and 129-166 (SKND…SELE). The span at 101–113 (PSSDSPSLENSLS) shows a compositional bias: low complexity. A phosphoserine mark is found at S141, S145, S149, S150, S163, and S177. Residues 173-652 (SRSLSFSMNG…AVTFQSLIKE (480 aa)) form a glycosyltransferase region. Residue T189 is modified to Phosphothreonine.

It in the N-terminal section; belongs to the glycosyltransferase 20 family.

The catalysed reaction is D-glucose 6-phosphate + UDP-alpha-D-glucose = alpha,alpha-trehalose 6-phosphate + UDP + H(+). In Schizosaccharomyces pombe (strain 972 / ATCC 24843) (Fission yeast), this protein is Putative alpha,alpha-trehalose-phosphate synthase [UDP-forming] 106 kDa subunit.